The following is a 227-amino-acid chain: Lipoprotein-releasing system ATP-binding protein LolD (227 aa).

Positions 7–227 constitute an ABC transporter domain; the sequence is LSCRNLGKSY…RLEGGRLVEA (221 aa). ATP is bound at residue 43-50; it reads GTSGSGKS.

It belongs to the ABC transporter superfamily. Lipoprotein translocase (TC 3.A.1.125) family. The complex is composed of two ATP-binding proteins (LolD) and two transmembrane proteins (LolC and LolE).

It is found in the cell inner membrane. In terms of biological role, part of the ABC transporter complex LolCDE involved in the translocation of mature outer membrane-directed lipoproteins, from the inner membrane to the periplasmic chaperone, LolA. Responsible for the formation of the LolA-lipoprotein complex in an ATP-dependent manner. This is Lipoprotein-releasing system ATP-binding protein LolD from Pseudomonas syringae pv. tomato (strain ATCC BAA-871 / DC3000).